The sequence spans 257 residues: Phycoerythrobilin:ferredoxin oxidoreductase (257 aa).

Belongs to the HY2 family.

It carries out the reaction (3Z)-phycoerythrobilin + oxidized 2[4Fe-4S]-[ferredoxin] = 15,16-dihydrobiliverdin + reduced 2[4Fe-4S]-[ferredoxin] + 2 H(+). In terms of biological role, catalyzes the two-electron reduction of the C2 and C3(1) diene system of 15,16-dihydrobiliverdin. This is Phycoerythrobilin:ferredoxin oxidoreductase from Prochlorococcus marinus (strain MIT 9303).